The sequence spans 368 residues: H-2 class I histocompatibility antigen, K-D alpha chain (368 aa).

Residues 1 to 21 (MAPCTLLLLLAAALAPTQTRA) form the signal peptide. The segment at 22 to 111 (GPHSLRYFVT…AQRYYNQSKG (90 aa)) is alpha-1. Residues 22–305 (GPHSLRYFVT…KLPPSTVSNT (284 aa)) are Extracellular-facing. An N-linked (GlcNAc...) asparagine glycan is attached at Asn107. The tract at residues 112 to 203 (GSHTFQRMFG…ELGNETLLRT (92 aa)) is alpha-2. Cys122 and Cys185 are joined by a disulfide. Residues Asn197 and Asn277 are each glycosylated (N-linked (GlcNAc...) asparagine). Positions 204–295 (DSPKAHVTYH…GLPEPLTLRW (92 aa)) are alpha-3. Residues 206 to 294 (PKAHVTYHPR…KGLPEPLTLR (89 aa)) form the Ig-like C1-type domain. An intrachain disulfide couples Cys224 to Cys280. The segment at 296-305 (KLPPSTVSNT) is connecting peptide. Residues 306–328 (VIIAVLVVLGAAIVTGAVVAFVM) traverse the membrane as a helical segment. The Cytoplasmic segment spans residues 329–368 (KMRRNTGGKGVNYALAPGSQTSDLSLPDGKVMVHDPHSLA). A phosphoserine mark is found at Ser350 and Ser353.

It belongs to the MHC class I family. As to quaternary structure, heterodimer of an alpha chain and a beta chain (beta-2-microglobulin).

The protein localises to the membrane. Its function is as follows. Involved in the presentation of foreign antigens to the immune system. The protein is H-2 class I histocompatibility antigen, K-D alpha chain (H2-K1) of Mus musculus (Mouse).